The following is a 413-amino-acid chain: Serine hydroxymethyltransferase (413 aa).

Residues Leu119 and 123–125 (GHL) contribute to the (6S)-5,6,7,8-tetrahydrofolate site. Lys228 is subject to N6-(pyridoxal phosphate)lysine. Position 351–353 (351–353 (SPF)) interacts with (6S)-5,6,7,8-tetrahydrofolate.

It belongs to the SHMT family. As to quaternary structure, homodimer. It depends on pyridoxal 5'-phosphate as a cofactor.

The protein resides in the cytoplasm. It catalyses the reaction (6R)-5,10-methylene-5,6,7,8-tetrahydrofolate + glycine + H2O = (6S)-5,6,7,8-tetrahydrofolate + L-serine. Its pathway is one-carbon metabolism; tetrahydrofolate interconversion. It functions in the pathway amino-acid biosynthesis; glycine biosynthesis; glycine from L-serine: step 1/1. Functionally, catalyzes the reversible interconversion of serine and glycine with tetrahydrofolate (THF) serving as the one-carbon carrier. This reaction serves as the major source of one-carbon groups required for the biosynthesis of purines, thymidylate, methionine, and other important biomolecules. Also exhibits THF-independent aldolase activity toward beta-hydroxyamino acids, producing glycine and aldehydes, via a retro-aldol mechanism. This Lysinibacillus sphaericus (strain C3-41) protein is Serine hydroxymethyltransferase.